Reading from the N-terminus, the 445-residue chain is Trigger factor (445 aa).

In terms of domain architecture, PPIase FKBP-type spans 172-257 (GDQVVINFVG…VKSVNWAHLP (86 aa)).

This sequence belongs to the FKBP-type PPIase family. Tig subfamily.

It is found in the cytoplasm. It catalyses the reaction [protein]-peptidylproline (omega=180) = [protein]-peptidylproline (omega=0). In terms of biological role, involved in protein export. Acts as a chaperone by maintaining the newly synthesized protein in an open conformation. Functions as a peptidyl-prolyl cis-trans isomerase. The polypeptide is Trigger factor (Polynucleobacter necessarius subsp. necessarius (strain STIR1)).